Here is a 317-residue protein sequence, read N- to C-terminus: Transaldolase (317 aa).

K132 acts as the Schiff-base intermediate with substrate in catalysis.

This sequence belongs to the transaldolase family. Type 1 subfamily. Homodimer.

It is found in the cytoplasm. It carries out the reaction D-sedoheptulose 7-phosphate + D-glyceraldehyde 3-phosphate = D-erythrose 4-phosphate + beta-D-fructose 6-phosphate. It participates in carbohydrate degradation; pentose phosphate pathway; D-glyceraldehyde 3-phosphate and beta-D-fructose 6-phosphate from D-ribose 5-phosphate and D-xylulose 5-phosphate (non-oxidative stage): step 2/3. Functionally, transaldolase is important for the balance of metabolites in the pentose-phosphate pathway. This is Transaldolase from Edwardsiella ictaluri (strain 93-146).